The primary structure comprises 81 residues: ATP synthase subunit c, chloroplastic (81 aa).

2 consecutive transmembrane segments (helical) span residues 7-27 (AASV…PGVG) and 57-77 (LAFM…LLFA).

This sequence belongs to the ATPase C chain family. In terms of assembly, F-type ATPases have 2 components, F(1) - the catalytic core - and F(0) - the membrane proton channel. F(1) has five subunits: alpha(3), beta(3), gamma(1), delta(1), epsilon(1). F(0) has four main subunits: a(1), b(1), b'(1) and c(10-14). The alpha and beta chains form an alternating ring which encloses part of the gamma chain. F(1) is attached to F(0) by a central stalk formed by the gamma and epsilon chains, while a peripheral stalk is formed by the delta, b and b' chains.

The protein resides in the plastid. It is found in the chloroplast thylakoid membrane. In terms of biological role, f(1)F(0) ATP synthase produces ATP from ADP in the presence of a proton or sodium gradient. F-type ATPases consist of two structural domains, F(1) containing the extramembraneous catalytic core and F(0) containing the membrane proton channel, linked together by a central stalk and a peripheral stalk. During catalysis, ATP synthesis in the catalytic domain of F(1) is coupled via a rotary mechanism of the central stalk subunits to proton translocation. Functionally, key component of the F(0) channel; it plays a direct role in translocation across the membrane. A homomeric c-ring of between 10-14 subunits forms the central stalk rotor element with the F(1) delta and epsilon subunits. The polypeptide is ATP synthase subunit c, chloroplastic (Arabis hirsuta (Hairy rock-cress)).